The sequence spans 246 residues: Acetoacetate decarboxylase (246 aa).

K116 acts as the Schiff-base intermediate with acetoacetate in catalysis.

This sequence belongs to the ADC family.

The catalysed reaction is acetoacetate + H(+) = acetone + CO2. Catalyzes the conversion of acetoacetate to acetone and carbon dioxide. This is Acetoacetate decarboxylase from Burkholderia cenocepacia (strain HI2424).